We begin with the raw amino-acid sequence, 167 residues long: Phosphopantetheine adenylyltransferase (167 aa).

Ser-11 contacts substrate. ATP contacts are provided by residues 11-12 and His-19; that span reads SF. Positions 43, 76, and 90 each coordinate substrate. ATP-binding positions include 91-93, Glu-101, and 126-132; these read GIR and YDALSST.

Belongs to the bacterial CoaD family. In terms of assembly, homohexamer. Mg(2+) is required as a cofactor.

It localises to the cytoplasm. It carries out the reaction (R)-4'-phosphopantetheine + ATP + H(+) = 3'-dephospho-CoA + diphosphate. It participates in cofactor biosynthesis; coenzyme A biosynthesis; CoA from (R)-pantothenate: step 4/5. Reversibly transfers an adenylyl group from ATP to 4'-phosphopantetheine, yielding dephospho-CoA (dPCoA) and pyrophosphate. This is Phosphopantetheine adenylyltransferase from Lacticaseibacillus casei (strain BL23) (Lactobacillus casei).